The sequence spans 284 residues: MMEQKIVQIGDIPVANDKPFTLFAGMNVLESRDLAMQICEHYVKVTDKLGIPYVFKASFDKANRSSVHSYRGPGLEEGMKIFQELKDTFGVKIITDVHTEAQAQPVADVVDVIQLPAFLARQTDLVEAMAKTGAVINVKKPQFMSPGQVGNIVEKFAECGNDKIILCERGSCHGYDNLVVDMLGFGVMKKASKGSPIIFDVTHSLQMRDPSGAASGGRREQTVELAKAGLATGIAGLFIEAHPNPDQARCDGPSALPLDKLEPFLAQMKALDDLVKSFASIDIR.

The protein belongs to the KdsA family.

The protein resides in the cytoplasm. It catalyses the reaction D-arabinose 5-phosphate + phosphoenolpyruvate + H2O = 3-deoxy-alpha-D-manno-2-octulosonate-8-phosphate + phosphate. The protein operates within carbohydrate biosynthesis; 3-deoxy-D-manno-octulosonate biosynthesis; 3-deoxy-D-manno-octulosonate from D-ribulose 5-phosphate: step 2/3. Its pathway is bacterial outer membrane biogenesis; lipopolysaccharide biosynthesis. The sequence is that of 2-dehydro-3-deoxyphosphooctonate aldolase from Vibrio vulnificus (strain CMCP6).